A 302-amino-acid polypeptide reads, in one-letter code: Uroporphyrinogen-III synthase, chloroplastic (302 aa).

The tract at residues 1-39 (MALSSSSHLLPFSRPPATFPRARHAGGGRGRAGATGRFI) is disordered. The transit peptide at 1-50 (MALSSSSHLLPFSRPPATFPRARHAGGGRGRAGATGRFIACSSPPPPDVV) directs the protein to the chloroplast.

Belongs to the uroporphyrinogen-III synthase family.

It is found in the plastid. The protein localises to the chloroplast. The enzyme catalyses hydroxymethylbilane = uroporphyrinogen III + H2O. Its pathway is porphyrin-containing compound metabolism; protoporphyrin-IX biosynthesis; coproporphyrinogen-III from 5-aminolevulinate: step 3/4. Functionally, catalyzes cyclization of the linear tetrapyrrole, hydroxymethylbilane, to the macrocyclic uroporphyrinogen III, a precursor of tetrapyrroles such as chlorophyll, heme and phycobilins. The sequence is that of Uroporphyrinogen-III synthase, chloroplastic (UROS) from Oryza sativa subsp. japonica (Rice).